Reading from the N-terminus, the 288-residue chain is 4-diphosphocytidyl-2-C-methyl-D-erythritol kinase (288 aa).

Residue lysine 11 is part of the active site. ATP is bound at residue 100–110 (PIAAGLGSGSS). Residue aspartate 140 is part of the active site.

Belongs to the GHMP kinase family. IspE subfamily.

It carries out the reaction 4-CDP-2-C-methyl-D-erythritol + ATP = 4-CDP-2-C-methyl-D-erythritol 2-phosphate + ADP + H(+). It functions in the pathway isoprenoid biosynthesis; isopentenyl diphosphate biosynthesis via DXP pathway; isopentenyl diphosphate from 1-deoxy-D-xylulose 5-phosphate: step 3/6. In terms of biological role, catalyzes the phosphorylation of the position 2 hydroxy group of 4-diphosphocytidyl-2C-methyl-D-erythritol. In Wolbachia pipientis wMel, this protein is 4-diphosphocytidyl-2-C-methyl-D-erythritol kinase.